The primary structure comprises 353 residues: Holliday junction branch migration complex subunit RuvB (353 aa).

Residues 1–183 (MNEPRIVAPQ…FGATYRLDFY (183 aa)) form a large ATPase domain (RuvB-L) region. ATP is bound by residues leucine 22, arginine 23, glycine 64, lysine 67, threonine 68, threonine 69, 130 to 132 (EDF), arginine 173, tyrosine 183, and arginine 220. Position 68 (threonine 68) interacts with Mg(2+). The interval 184 to 254 (DTAALRAIVE…LARLALDQLA (71 aa)) is small ATPAse domain (RuvB-S). The segment at 257-353 (ELGLDEVDRL…HAASERSSDA (97 aa)) is head domain (RuvB-H). DNA-binding residues include arginine 312 and arginine 317.

It belongs to the RuvB family. In terms of assembly, homohexamer. Forms an RuvA(8)-RuvB(12)-Holliday junction (HJ) complex. HJ DNA is sandwiched between 2 RuvA tetramers; dsDNA enters through RuvA and exits via RuvB. An RuvB hexamer assembles on each DNA strand where it exits the tetramer. Each RuvB hexamer is contacted by two RuvA subunits (via domain III) on 2 adjacent RuvB subunits; this complex drives branch migration. In the full resolvosome a probable DNA-RuvA(4)-RuvB(12)-RuvC(2) complex forms which resolves the HJ.

It localises to the cytoplasm. It catalyses the reaction ATP + H2O = ADP + phosphate + H(+). Functionally, the RuvA-RuvB-RuvC complex processes Holliday junction (HJ) DNA during genetic recombination and DNA repair, while the RuvA-RuvB complex plays an important role in the rescue of blocked DNA replication forks via replication fork reversal (RFR). RuvA specifically binds to HJ cruciform DNA, conferring on it an open structure. The RuvB hexamer acts as an ATP-dependent pump, pulling dsDNA into and through the RuvAB complex. RuvB forms 2 homohexamers on either side of HJ DNA bound by 1 or 2 RuvA tetramers; 4 subunits per hexamer contact DNA at a time. Coordinated motions by a converter formed by DNA-disengaged RuvB subunits stimulates ATP hydrolysis and nucleotide exchange. Immobilization of the converter enables RuvB to convert the ATP-contained energy into a lever motion, pulling 2 nucleotides of DNA out of the RuvA tetramer per ATP hydrolyzed, thus driving DNA branch migration. The RuvB motors rotate together with the DNA substrate, which together with the progressing nucleotide cycle form the mechanistic basis for DNA recombination by continuous HJ branch migration. Branch migration allows RuvC to scan DNA until it finds its consensus sequence, where it cleaves and resolves cruciform DNA. This Thermomicrobium roseum (strain ATCC 27502 / DSM 5159 / P-2) protein is Holliday junction branch migration complex subunit RuvB.